Reading from the N-terminus, the 194-residue chain is Peptidyl-tRNA hydrolase (194 aa).

Tyr16 provides a ligand contact to tRNA. The active-site Proton acceptor is the His21. Residues Phe67, Asn69, and Asn115 each coordinate tRNA.

This sequence belongs to the PTH family. Monomer.

The protein localises to the cytoplasm. The enzyme catalyses an N-acyl-L-alpha-aminoacyl-tRNA + H2O = an N-acyl-L-amino acid + a tRNA + H(+). Hydrolyzes ribosome-free peptidyl-tRNAs (with 1 or more amino acids incorporated), which drop off the ribosome during protein synthesis, or as a result of ribosome stalling. Its function is as follows. Catalyzes the release of premature peptidyl moieties from peptidyl-tRNA molecules trapped in stalled 50S ribosomal subunits, and thus maintains levels of free tRNAs and 50S ribosomes. The chain is Peptidyl-tRNA hydrolase from Sodalis glossinidius (strain morsitans).